We begin with the raw amino-acid sequence, 57 residues long: Large ribosomal subunit protein bL33 (57 aa).

The protein belongs to the bacterial ribosomal protein bL33 family.

The sequence is that of Large ribosomal subunit protein bL33 from Shewanella amazonensis (strain ATCC BAA-1098 / SB2B).